The primary structure comprises 220 residues: Riboflavin kinase (220 aa).

Positions methionine 1–asparagine 92 are H-T-H motif-like. Positions valine 93 to threonine 220 are riboflavin kinase. Glycine 102–arginine 107 provides a ligand contact to CDP. Mg(2+) is bound by residues threonine 131 and asparagine 133. FMN contacts are provided by threonine 188 and glutamate 195. Lysine 200–arginine 203 is a CDP binding site.

Belongs to the archaeal riboflavin kinase family. Requires Mg(2+) as cofactor.

It catalyses the reaction riboflavin + CTP = CDP + FMN + H(+). It participates in cofactor biosynthesis; FMN biosynthesis; FMN from riboflavin (CTP route): step 1/1. Its function is as follows. Catalyzes the CTP-dependent phosphorylation of riboflavin (vitamin B2) to form flavin mononucleotide (FMN). The polypeptide is Riboflavin kinase (ribK) (Thermoplasma acidophilum (strain ATCC 25905 / DSM 1728 / JCM 9062 / NBRC 15155 / AMRC-C165)).